We begin with the raw amino-acid sequence, 248 residues long: Probable transcriptional regulatory protein M446_6579 (248 aa).

Belongs to the TACO1 family.

Its subcellular location is the cytoplasm. This chain is Probable transcriptional regulatory protein M446_6579, found in Methylobacterium sp. (strain 4-46).